A 225-amino-acid chain; its full sequence is C-reactive protein (225 aa).

Positions 1–20 are cleaved as a signal peptide; the sequence is MEKLLWCFLTLVSFSNMSDQ. Residues 24 to 225 enclose the Pentraxin (PTX) domain; it reads HKKAFVFPKE…EVHVKPQLWP (202 aa). C55 and C116 are joined by a disulfide. Positions 80, 158, 159, and 169 each coordinate Ca(2+).

Belongs to the pentraxin family. Homopentamer. Pentraxin (or pentaxin) have a discoid arrangement of 5 non-covalently bound subunits. Interacts with FCN1; may regulate monocyte activation by FCN1. Ca(2+) serves as cofactor. As to expression, found in plasma.

The protein localises to the secreted. Functionally, displays several functions associated with host defense: it promotes agglutination, bacterial capsular swelling, phagocytosis and complement fixation through its calcium-dependent binding to phosphorylcholine. Can interact with DNA and histones and may scavenge nuclear material released from damaged circulating cells. This Oryctolagus cuniculus (Rabbit) protein is C-reactive protein (CRP).